The primary structure comprises 359 residues: 3-dehydroquinate synthase (359 aa).

NAD(+) is bound by residues 71-76, 105-109, 129-130, lysine 142, lysine 151, and 169-172; these read DGEAYK, GVIGD, TT, and TLGT. Zn(2+) is bound by residues glutamate 184, histidine 247, and histidine 264.

The protein belongs to the sugar phosphate cyclases superfamily. Dehydroquinate synthase family. It depends on Co(2+) as a cofactor. Zn(2+) serves as cofactor. NAD(+) is required as a cofactor.

It localises to the cytoplasm. The catalysed reaction is 7-phospho-2-dehydro-3-deoxy-D-arabino-heptonate = 3-dehydroquinate + phosphate. The protein operates within metabolic intermediate biosynthesis; chorismate biosynthesis; chorismate from D-erythrose 4-phosphate and phosphoenolpyruvate: step 2/7. Functionally, catalyzes the conversion of 3-deoxy-D-arabino-heptulosonate 7-phosphate (DAHP) to dehydroquinate (DHQ). The polypeptide is 3-dehydroquinate synthase (Thiobacillus denitrificans (strain ATCC 25259 / T1)).